Here is a 339-residue protein sequence, read N- to C-terminus: Beta-ketoacyl-[acyl-carrier-protein] synthase III (339 aa).

Catalysis depends on residues Cys119 and His262. Residues 263–267 form an ACP-binding region; sequence QANQR. Asn292 is an active-site residue.

It belongs to the thiolase-like superfamily. FabH family. As to quaternary structure, homodimer.

The protein localises to the cytoplasm. The catalysed reaction is malonyl-[ACP] + acetyl-CoA + H(+) = 3-oxobutanoyl-[ACP] + CO2 + CoA. It functions in the pathway lipid metabolism; fatty acid biosynthesis. Functionally, catalyzes the condensation reaction of fatty acid synthesis by the addition to an acyl acceptor of two carbons from malonyl-ACP. Catalyzes the first condensation reaction which initiates fatty acid synthesis and may therefore play a role in governing the total rate of fatty acid production. Possesses both acetoacetyl-ACP synthase and acetyl transacylase activities. Its substrate specificity determines the biosynthesis of branched-chain and/or straight-chain of fatty acids. The protein is Beta-ketoacyl-[acyl-carrier-protein] synthase III of Prochlorococcus marinus (strain MIT 9313).